The primary structure comprises 259 residues: Cell division protein FtsQ (259 aa).

The Cytoplasmic portion of the chain corresponds to 1–15; sequence MTRDQTATFGRHALR. A helical membrane pass occupies residues 16–36; that stretch reads VAGSGLLVAGVVALGLLGWQW. At 37–259 the chain is on the periplasmic side; sequence RANVTVDRVA…VVTRTRPLDG (223 aa). One can recognise a POTRA domain in the interval 40 to 109; it reads VTVDRVAVTG…GALTISVTER (70 aa).

Belongs to the FtsQ/DivIB family. FtsQ subfamily.

It localises to the cell inner membrane. In terms of biological role, essential cell division protein. The protein is Cell division protein FtsQ of Salinibacter ruber (strain DSM 13855 / M31).